Consider the following 257-residue polypeptide: uncharacterized protein (257 aa).

The helical transmembrane segment at L7 to N27 threads the bilayer.

It belongs to the staphylococcal tandem lipoprotein family.

It is found in the cell membrane. This is an uncharacterized protein from Staphylococcus epidermidis (strain ATCC 12228 / FDA PCI 1200).